A 369-amino-acid chain; its full sequence is Queuine tRNA-ribosyltransferase (369 aa).

The active-site Proton acceptor is Asp-90. Substrate is bound by residues 90–94, Asp-144, Gln-186, and Gly-213; that span reads DSGGF. The RNA binding stretch occupies residues 244-250; it reads GVGKPAD. Asp-263 acts as the Nucleophile in catalysis. 4 residues coordinate Zn(2+): Cys-301, Cys-303, Cys-306, and His-332.

This sequence belongs to the queuine tRNA-ribosyltransferase family. In terms of assembly, homodimer. Within each dimer, one monomer is responsible for RNA recognition and catalysis, while the other monomer binds to the replacement base PreQ1. It depends on Zn(2+) as a cofactor.

The catalysed reaction is 7-aminomethyl-7-carbaguanine + guanosine(34) in tRNA = 7-aminomethyl-7-carbaguanosine(34) in tRNA + guanine. Its pathway is tRNA modification; tRNA-queuosine biosynthesis. In terms of biological role, catalyzes the base-exchange of a guanine (G) residue with the queuine precursor 7-aminomethyl-7-deazaguanine (PreQ1) at position 34 (anticodon wobble position) in tRNAs with GU(N) anticodons (tRNA-Asp, -Asn, -His and -Tyr). Catalysis occurs through a double-displacement mechanism. The nucleophile active site attacks the C1' of nucleotide 34 to detach the guanine base from the RNA, forming a covalent enzyme-RNA intermediate. The proton acceptor active site deprotonates the incoming PreQ1, allowing a nucleophilic attack on the C1' of the ribose to form the product. After dissociation, two additional enzymatic reactions on the tRNA convert PreQ1 to queuine (Q), resulting in the hypermodified nucleoside queuosine (7-(((4,5-cis-dihydroxy-2-cyclopenten-1-yl)amino)methyl)-7-deazaguanosine). The polypeptide is Queuine tRNA-ribosyltransferase (Dichelobacter nodosus (strain VCS1703A)).